A 117-amino-acid polypeptide reads, in one-letter code: Putative pterin-4-alpha-carbinolamine dehydratase (117 aa).

Belongs to the pterin-4-alpha-carbinolamine dehydratase family.

It catalyses the reaction (4aS,6R)-4a-hydroxy-L-erythro-5,6,7,8-tetrahydrobiopterin = (6R)-L-erythro-6,7-dihydrobiopterin + H2O. The protein is Putative pterin-4-alpha-carbinolamine dehydratase of Azoarcus sp. (strain BH72).